The chain runs to 592 residues: Potassium-transporting ATPase potassium-binding subunit (592 aa).

Transmembrane regions (helical) follow at residues 7-27, 71-91, 136-156, 179-199, 287-307, 314-334, 411-431, 449-469, 473-493, 515-535, and 559-579; these read LQTV…GTFM, VLFN…QHLL, GLTV…IAVI, LYIL…QGVI, LEIL…GAMV, WTLL…LQGV, GLYT…LMIG, SVVT…IAMI, AVAA…YAFA, ILGA…VLAM, and FALW…FPAL.

It belongs to the KdpA family. The system is composed of three essential subunits: KdpA, KdpB and KdpC.

Its subcellular location is the cell inner membrane. Its function is as follows. Part of the high-affinity ATP-driven potassium transport (or Kdp) system, which catalyzes the hydrolysis of ATP coupled with the electrogenic transport of potassium into the cytoplasm. This subunit binds the periplasmic potassium ions and delivers the ions to the membrane domain of KdpB through an intramembrane tunnel. The polypeptide is Potassium-transporting ATPase potassium-binding subunit (Geobacter sulfurreducens (strain ATCC 51573 / DSM 12127 / PCA)).